Here is a 25-residue protein sequence, read N- to C-terminus: Fructokinase-1 (25 aa).

Belongs to the ROK (NagC/XylR) family. In terms of assembly, homodimer. Mg(2+) is required as a cofactor.

The catalysed reaction is D-fructose + ATP = D-fructose 6-phosphate + ADP + H(+). With respect to regulation, inhibition by zinc ions (Potential). Inactivated by EDTA. The sequence is that of Fructokinase-1 from Lactococcus lactis subsp. lactis (Streptococcus lactis).